Reading from the N-terminus, the 444-residue chain is Maltoporin (444 aa).

The signal sequence occupies residues 1-24 (MITLRKVPLALAIAAGILSAQAGA).

Belongs to the porin LamB (TC 1.B.3) family. As to quaternary structure, homotrimer formed of three 18-stranded antiparallel beta-barrels, containing three independent channels.

It localises to the cell outer membrane. The enzyme catalyses beta-maltose(in) = beta-maltose(out). Functionally, involved in the transport of maltose and maltodextrins. The chain is Maltoporin from Enterobacter sp. (strain 638).